We begin with the raw amino-acid sequence, 382 residues long: Lycopene beta-cyclase (382 aa).

6–36 (DLILVGAGLANGLIALRLQQQQPDMRILLID) serves as a coordination point for NAD(+).

It belongs to the lycopene cyclase family. FAD is required as a cofactor.

The protein localises to the cell inner membrane. It carries out the reaction a carotenoid psi-end group = a carotenoid beta-end derivative. The catalysed reaction is all-trans-lycopene = gamma-carotene. The enzyme catalyses gamma-carotene = all-trans-beta-carotene. It catalyses the reaction all-trans-neurosporene = beta-zeacarotene. It carries out the reaction beta-zeacarotene = 7,8-dihydro-beta-carotene. The protein operates within carotenoid biosynthesis; beta-carotene biosynthesis. With respect to regulation, activity is increased in the presence of NAD(P)H. NADPH is not involved directly in the cyclization reaction, but must play an indirect role, e.g. as an allosteric activator. Functionally, catalyzes the double cyclization reaction which converts lycopene to beta-carotene. Also catalyzes the double cyclization reaction which converts neurosporene to 7,8-dihydro-beta-carotene via monocyclic beta-zeacarotene. May also convert zeta-carotene to bicyclic 7,8,7',8'-tetrahydro-beta-carotene. The polypeptide is Lycopene beta-cyclase (Pantoea ananas (Erwinia uredovora)).